A 117-amino-acid polypeptide reads, in one-letter code: Large ribosomal subunit protein bL19 (117 aa).

Belongs to the bacterial ribosomal protein bL19 family.

Its function is as follows. This protein is located at the 30S-50S ribosomal subunit interface and may play a role in the structure and function of the aminoacyl-tRNA binding site. This chain is Large ribosomal subunit protein bL19, found in Blochmanniella floridana.